The following is a 317-amino-acid chain: 4-diphosphocytidyl-2-C-methyl-D-erythritol kinase (317 aa).

The active site involves lysine 11. ATP is bound at residue 99–109 (PVAAGLAGGST). Aspartate 141 is a catalytic residue.

The protein belongs to the GHMP kinase family. IspE subfamily.

It carries out the reaction 4-CDP-2-C-methyl-D-erythritol + ATP = 4-CDP-2-C-methyl-D-erythritol 2-phosphate + ADP + H(+). It functions in the pathway isoprenoid biosynthesis; isopentenyl diphosphate biosynthesis via DXP pathway; isopentenyl diphosphate from 1-deoxy-D-xylulose 5-phosphate: step 3/6. Functionally, catalyzes the phosphorylation of the position 2 hydroxy group of 4-diphosphocytidyl-2C-methyl-D-erythritol. This Nostoc punctiforme (strain ATCC 29133 / PCC 73102) protein is 4-diphosphocytidyl-2-C-methyl-D-erythritol kinase.